We begin with the raw amino-acid sequence, 213 residues long: 3-demethoxyubiquinol 3-hydroxylase (213 aa).

The Fe cation site is built by Glu62, Glu92, His95, Glu144, Glu176, and His179.

This sequence belongs to the COQ7 family. Fe cation serves as cofactor.

It is found in the cell membrane. It carries out the reaction a 5-methoxy-2-methyl-3-(all-trans-polyprenyl)benzene-1,4-diol + AH2 + O2 = a 3-demethylubiquinol + A + H2O. It functions in the pathway cofactor biosynthesis; ubiquinone biosynthesis. Its function is as follows. Catalyzes the hydroxylation of 2-nonaprenyl-3-methyl-6-methoxy-1,4-benzoquinol during ubiquinone biosynthesis. This is 3-demethoxyubiquinol 3-hydroxylase from Chromohalobacter salexigens (strain ATCC BAA-138 / DSM 3043 / CIP 106854 / NCIMB 13768 / 1H11).